The primary structure comprises 330 residues: Short chain dehydrogenase yanD (330 aa).

NADP(+) contacts are provided by Lys-57, Asp-86, Asn-113, Tyr-204, and Lys-208. The active-site Proton donor is Tyr-204. Lys-208 serves as the catalytic Lowers pKa of active site Tyr.

Belongs to the short-chain dehydrogenases/reductases (SDR) family.

The protein operates within secondary metabolite biosynthesis; terpenoid biosynthesis. Short chain dehydrogenase; part of the gene cluster that mediates the biosynthesis of yanuthone D, a fungal isoprenoid epoxycyclohexenone that acts as an antibiotic against fungi and bacteria. The first step of the pathway is the synthesis of 6-methylsalicylic acid (6-MSA) by the polyketide synthase yanA. 6-MSA is then converted to m-cresol by the decarboxylase yanB. The cytochrome P450 monooxygenase yanC then catalyzes the oxidation of m-cresol to toluquinol. Epoxidation of toluquinol is then performed by the short chain dehydrogenase yanD, with the help of yanE, and a further prenylation by yanG leads to 7-deacetoxyyanuthone A. The next step is the hydroxylation of C-22 of 7-deacetoxyyanuthone A by the cytochrome P450 monooxygenase yanH to yield 22-deacetylyanuthone A. O-Mevalon transferase yanI then attaches mevalon to the hydroxyl group of 22-deacetylyanuthone A to produce yanuthone E. Finally, the FAD-dependent monooxygenase yanF oxidizes the hydroxyl group at C15 of yanuthone E to form yanuthone D. Furthermore, several branching points in the pathway lead to the production of yanuthones F and G from 7-deacetoxyyanuthone A; yanuthones H and I from 22-deacetylyanuthone A; and yanuthone J from yanuthone E. YanD is also involved in the synthesis of yanuthone X1 which does not have 6-methylsalicylic acid (6-MSA) as precursor. This is Short chain dehydrogenase yanD from Aspergillus niger (strain ATCC 1015 / CBS 113.46 / FGSC A1144 / LSHB Ac4 / NCTC 3858a / NRRL 328 / USDA 3528.7).